We begin with the raw amino-acid sequence, 630 residues long: DNA mismatch repair protein MutL (630 aa).

Belongs to the DNA mismatch repair MutL/HexB family.

Functionally, this protein is involved in the repair of mismatches in DNA. It is required for dam-dependent methyl-directed DNA mismatch repair. May act as a 'molecular matchmaker', a protein that promotes the formation of a stable complex between two or more DNA-binding proteins in an ATP-dependent manner without itself being part of a final effector complex. This is DNA mismatch repair protein MutL from Lactobacillus johnsonii (strain CNCM I-12250 / La1 / NCC 533).